We begin with the raw amino-acid sequence, 560 residues long: Serine palmitoyltransferase 2 (560 aa).

The chain crosses the membrane as a helical span at residues P65 to L85. Position 377 is an N6-(pyridoxal phosphate)lysine (K377).

Belongs to the class-II pyridoxal-phosphate-dependent aminotransferase family. In terms of assembly, component of the serine palmitoyltransferase (SPT) complex, which is composed of SPTLC1, SPTLC2 or SPTLC3 and SPTSSA or SPTSSB. The heterodimer consisting of SPTLC1 and SPTLC2/SPTLC3 forms the catalytic core of the enzyme, while SPTSSA or SPTSSB subunits determine substrate specificity. SPT also interacts with ORMDL proteins, especially ORMDL3, which negatively regulate SPT activity in the presence of ceramides. Forms dimers of heterodimers with SPTLC1. Pyridoxal 5'-phosphate is required as a cofactor. As to expression, expressed in astrocytes.

It localises to the endoplasmic reticulum membrane. It catalyses the reaction L-serine + hexadecanoyl-CoA + H(+) = 3-oxosphinganine + CO2 + CoA. The enzyme catalyses octadecanoyl-CoA + L-serine + H(+) = 3-oxoeicosasphinganine + CO2 + CoA. It participates in lipid metabolism; sphingolipid metabolism. SPT complex catalytic activity is negatively regulated by ORMDL proteins, including ORMDL3, in the presence of ceramides. This mechanism allows to maintain ceramide levels at sufficient concentrations for the production of complex sphingolipids, but which prevents the accumulation of ceramides to levels that trigger apoptosis. Component of the serine palmitoyltransferase multisubunit enzyme (SPT) that catalyzes the initial and rate-limiting step in sphingolipid biosynthesis by condensing L-serine and activated acyl-CoA (most commonly palmitoyl-CoA) to form long-chain bases. The SPT complex is composed of SPTLC1, SPTLC2 or SPTLC3 and SPTSSA or SPTSSB. Within this complex, the heterodimer consisting of SPTLC1 and SPTLC2/SPTLC3 forms the catalytic core. The composition of the serine palmitoyltransferase (SPT) complex determines the substrate preference. The SPTLC1-SPTLC2-SPTSSA complex shows a strong preference for C16-CoA substrate, while the SPTLC1-SPTLC3-SPTSSA isozyme uses both C14-CoA and C16-CoA as substrates, with a slight preference for C14-CoA. The SPTLC1-SPTLC2-SPTSSB complex shows a strong preference for C18-CoA substrate, while the SPTLC1-SPTLC3-SPTSSB isozyme displays an ability to use a broader range of acyl-CoAs, without apparent preference. Crucial for adipogenesis. The sequence is that of Serine palmitoyltransferase 2 from Rattus norvegicus (Rat).